The following is a 530-amino-acid chain: RNA-binding protein 39 (530 aa).

The segment at 1 to 146 (MADDIDIEAM…PVREPIDNLT (146 aa)) is disordered. A2 carries the N-acetylalanine modification. Over residues 14-32 (PYKKDENKLNSANGHEERS) the composition is skewed to basic and acidic residues. 2 stretches are compositionally biased toward basic residues: residues 33–56 (KKRK…KERK) and 64–95 (KKSK…RGRY). Phosphotyrosine is present on Y95. Residues S97 and S100 each carry the phosphoserine modification. Residue K111 forms a Glycyl lysine isopeptide (Lys-Gly) (interchain with G-Cter in SUMO2) linkage. S117 carries the phosphoserine modification. A Glycyl lysine isopeptide (Lys-Gly) (interchain with G-Cter in SUMO2) cross-link involves residue K119. Over residues 119–130 (KLSRRRSRSKSP) the composition is skewed to basic residues. Phosphoserine occurs at positions 121 and 136. Basic and acidic residues predominate over residues 131-146 (FRKDKSPVREPIDNLT). T146 bears the Phosphothreonine mark. Positions 153–230 (RTVFCMQLAA…VPIIVQASQA (78 aa)) constitute an RRM 1 domain. K244 is covalently cross-linked (Glycyl lysine isopeptide (Lys-Gly) (interchain with G-Cter in SUMO2)). In terms of domain architecture, RRM 2 spans 250 to 328 (MRLYVGSLHF…RPMKVGHVTE (79 aa)). The activating domain stretch occupies residues 291–355 (KGYGFITFSD…RTGIDLGTTG (65 aa)). The interaction with JUN stretch occupies residues 291–406 (KGYGFITFSD…IDLQTRLSQQ (116 aa)). Residues S334, S337, and S341 each carry the phosphoserine modification. The interaction with ESR1 and ESR2 stretch occupies residues 355 to 406 (GRLQLMARLAEGTGLQIPPAAQQALQMSGSLAFGAVAEFSFVIDLQTRLSQQ). An interaction with NCOA6 region spans residues 406 to 530 (QTEASALAAA…ATQLLVPSRR (125 aa)). The 64-residue stretch at 445–508 (EIKDDVIEEC…KMITAAYVPL (64 aa)) folds into the RRM 3 domain.

Belongs to the splicing factor SR family. Interacts with NCOA6 and JUN. Interacts with ESR1 and ESR2, in the presence of estradiol (E2). Interacts with RSRC1 (via Arg/Ser-rich domain). Interacts with SF3B1. Interacts with ZNF106 (via N-terminus).

It localises to the nucleus. RNA-binding protein that acts as a pre-mRNA splicing factor. Acts by promoting exon inclusion via regulation of exon cassette splicing. Also acts as a transcriptional coactivator for steroid nuclear receptors ESR1/ER-alpha and ESR2/ER-beta, and JUN/AP-1, independently of the pre-mRNA splicing factor activity. In Mus musculus (Mouse), this protein is RNA-binding protein 39 (Rbm39).